The chain runs to 311 residues: Methionyl-tRNA formyltransferase (311 aa).

109–112 contributes to the (6S)-5,6,7,8-tetrahydrofolate binding site; sequence SLLP.

The protein belongs to the Fmt family.

It catalyses the reaction L-methionyl-tRNA(fMet) + (6R)-10-formyltetrahydrofolate = N-formyl-L-methionyl-tRNA(fMet) + (6S)-5,6,7,8-tetrahydrofolate + H(+). In terms of biological role, attaches a formyl group to the free amino group of methionyl-tRNA(fMet). The formyl group appears to play a dual role in the initiator identity of N-formylmethionyl-tRNA by promoting its recognition by IF2 and preventing the misappropriation of this tRNA by the elongation apparatus. The protein is Methionyl-tRNA formyltransferase of Staphylococcus aureus (strain MW2).